The primary structure comprises 279 residues: Phycobilisome rod-core linker polypeptide CpcG1 (279 aa).

The PBS-linker domain maps to 11–189 (SSQNQRVEGY…YWRDRQTLNA (179 aa)).

Belongs to the phycobilisome linker protein family. Part of the phycobilisome, a hemidiscoidal structure that is composed of two distinct substructures: a core complex and a number of rods radiating from the core.

The protein localises to the cellular thylakoid membrane. In terms of biological role, rod-core linker protein required for attachment of phycocyanin to allophycocyanin in cores of phycobilisomes. Linker polypeptides determine the state of aggregation and the location of the disk-shaped phycobiliprotein units within the phycobilisome and modulate their spectroscopic properties in order to mediate a directed and optimal energy transfer. The chain is Phycobilisome rod-core linker polypeptide CpcG1 from Nostoc sp. (strain PCC 7120 / SAG 25.82 / UTEX 2576).